Reading from the N-terminus, the 404-residue chain is MNKKIIILGTLDTKGEEFKFIKDIIEKEGLETIVIDVGVVGEAKLRPNIDKKEVAIVGGSSIEDLIKKKDRGYAMEVMMKGSAAIVKRLSKEEGISGIISLGGSGGTSIASYAMRALEVGIPKVMVSTLASGDTRPYVGEKDITMIYSVVDISGINTLSSKILSNAAYALIGMVKGKAPELKGEKPLIGATMFGVTTKGVNIAKEYLENNGYEVLVFHATGAGGRAMEDLIRSGYIKGVLDMTTTEWCDEVVGGVLNAGPNRLEAASDMGIPQVVAPGALDMVNFGPIETVPEEFKKRNLYKHNATVTLMRTTKEENIEIGKVIGEKLNRAKKDTALFIPLKGVSAIDAEGEVFYGYEEDKALFNTLKETVNKDKVQIVEMNNNINDEEFAIAMAKKLINMMEK.

It belongs to the UPF0261 family.

The chain is UPF0261 protein CTC_01794 from Clostridium tetani (strain Massachusetts / E88).